The primary structure comprises 830 residues: Heavy metal tolerance protein (830 aa).

The first 27 residues, 1–27 (MVLRYNSPRLNILELVLLYVGFFSIGS), serve as a signal peptide directing secretion. A run of 3 helical transmembrane segments spans residues 51 to 71 (PIGIISWWILGIALTYVVDIS), 88 to 108 (TTVVCLILFLLFWIIVLISCA), and 126 to 146 (LSVLYVWAIDIVFETIFIVYS). Asn150 carries an N-linked (GlcNAc...) asparagine glycan. 3 helical membrane passes run 156 to 176 (IVLADHVARLVLCVFATAIYL), 263 to 283 (FQIFICIVLLFLGRAVNILAP), and 304 to 324 (DVILFVIYRFLQGNMGVIGSL). In terms of domain architecture, ABC transmembrane type-1 spans 265–550 (IFICIVLLFL…FGTLYRSLQN (286 aa)). N-linked (GlcNAc...) asparagine glycosylation occurs at Asn350. Helical transmembrane passes span 381-401 (VVFQIGPVLLDLGVAMVYFFI) and 403-423 (FDIYFTLIVLIMTLCYCYVTV). Glutathione is bound by residues 429-433 (RTEAR), 492-495 (NIVQ), and Gly542. A helical membrane pass occupies residues 490-511 (FLNIVQGGIFTFSLAIACLLSA). The region spanning 584–818 (VIFSHVSFAY…DGGAYKKMWF (235 aa)) is the ABC transporter domain. ATP-binding positions include Tyr593 and 617-628 (GESGGGKSTIMR).

The protein belongs to the ABC transporter superfamily. ABCB family. Heavy Metal importer (TC 3.A.1.210) subfamily.

It is found in the vacuole membrane. In terms of biological role, involved in metal tolerance. Probably involved in the transport of metal-bound phytochelatins. Compartmentalizes cadmium within vacuoles, thereby protecting cells from cadmium toxicity. This chain is Heavy metal tolerance protein (hmt1), found in Schizosaccharomyces pombe (strain 972 / ATCC 24843) (Fission yeast).